Consider the following 274-residue polypeptide: Probable ribosomal RNA small subunit methyltransferase A (274 aa).

S-adenosyl-L-methionine contacts are provided by His-22, Leu-24, Gly-50, Glu-71, Asp-99, and Asn-114.

This sequence belongs to the class I-like SAM-binding methyltransferase superfamily. rRNA adenine N(6)-methyltransferase family. RsmA subfamily.

Its subcellular location is the cytoplasm. Specifically dimethylates two adjacent adenosines in the loop of a conserved hairpin near the 3'-end of 16S rRNA in the 30S particle. May play a critical role in biogenesis of 30S subunits. The polypeptide is Probable ribosomal RNA small subunit methyltransferase A (Natronomonas pharaonis (strain ATCC 35678 / DSM 2160 / CIP 103997 / JCM 8858 / NBRC 14720 / NCIMB 2260 / Gabara) (Halobacterium pharaonis)).